A 93-amino-acid chain; its full sequence is Defensin-like protein 229 (93 aa).

The N-terminal stretch at methionine 1–serine 19 is a signal peptide. 4 cysteine pairs are disulfide-bonded: cysteine 38–cysteine 93, cysteine 48–cysteine 72, cysteine 56–cysteine 84, and cysteine 70–cysteine 86.

It belongs to the DEFL family. In terms of tissue distribution, flower buds.

The protein resides in the secreted. The protein is Defensin-like protein 229 (SCRL27) of Arabidopsis thaliana (Mouse-ear cress).